Consider the following 227-residue polypeptide: Isopentenyl-diphosphate Delta-isomerase 1 (227 aa).

Lys36 serves as a coordination point for substrate. Positions 40 and 51 each coordinate Mg(2+). Residues 49–199 (LLHRAFSVFL…EIKITPWFQI (151 aa)) enclose the Nudix hydrolase domain. Residues Arg70 and Lys74 each coordinate substrate. Cys86 is a catalytic residue. A substrate-binding site is contributed by Ser87. Residues Glu146 and Glu148 each coordinate Mg(2+). Residue Glu148 is part of the active site. An N6-acetyllysine modification is found at Lys176. The short motif at 225-227 (HRM) is the Microbody targeting signal element.

It belongs to the IPP isomerase type 1 family. In terms of assembly, monomer. Requires Mg(2+) as cofactor.

The protein resides in the peroxisome. The catalysed reaction is isopentenyl diphosphate = dimethylallyl diphosphate. It functions in the pathway isoprenoid biosynthesis; dimethylallyl diphosphate biosynthesis; dimethylallyl diphosphate from isopentenyl diphosphate: step 1/1. In terms of biological role, catalyzes the 1,3-allylic rearrangement of the homoallylic substrate isopentenyl (IPP) to its highly electrophilic allylic isomer, dimethylallyl diphosphate (DMAPP). This Macaca fascicularis (Crab-eating macaque) protein is Isopentenyl-diphosphate Delta-isomerase 1 (IDI1).